The chain runs to 200 residues: HTH-type transcriptional regulator Hpr (200 aa).

In terms of domain architecture, HTH marR-type spans 13–157 (AMLFSQRIAQ…MMCIVRNIYG (145 aa)). Residues 63–86 (ISEIAKFGVMHVSTAFNFSKKLEE) constitute a DNA-binding region (H-T-H motif).

Homodimer.

Negative regulator of protease production and sporulation. The protein is HTH-type transcriptional regulator Hpr of Geobacillus thermodenitrificans (strain NG80-2).